Reading from the N-terminus, the 236-residue chain is Purine nucleoside phosphorylase DeoD-type (236 aa).

Histidine 4 is a binding site for a purine D-ribonucleoside. Phosphate is bound by residues glycine 20, arginine 24, arginine 43, and 87 to 90 (RVGS). Residues 179 to 181 (EME) and 203 to 204 (SD) contribute to the a purine D-ribonucleoside site. Aspartate 204 serves as the catalytic Proton donor.

It belongs to the PNP/UDP phosphorylase family. As to quaternary structure, homohexamer; trimer of homodimers.

It carries out the reaction a purine D-ribonucleoside + phosphate = a purine nucleobase + alpha-D-ribose 1-phosphate. The catalysed reaction is a purine 2'-deoxy-D-ribonucleoside + phosphate = a purine nucleobase + 2-deoxy-alpha-D-ribose 1-phosphate. Functionally, catalyzes the reversible phosphorolytic breakdown of the N-glycosidic bond in the beta-(deoxy)ribonucleoside molecules, with the formation of the corresponding free purine bases and pentose-1-phosphate. This chain is Purine nucleoside phosphorylase DeoD-type, found in Limosilactobacillus reuteri (strain DSM 20016) (Lactobacillus reuteri).